A 287-amino-acid chain; its full sequence is Ribosomal RNA small subunit methyltransferase A (287 aa).

S-adenosyl-L-methionine-binding residues include Asn28, Leu30, Gly55, Glu77, Asp103, and Asn123.

This sequence belongs to the class I-like SAM-binding methyltransferase superfamily. rRNA adenine N(6)-methyltransferase family. RsmA subfamily.

It localises to the cytoplasm. It catalyses the reaction adenosine(1518)/adenosine(1519) in 16S rRNA + 4 S-adenosyl-L-methionine = N(6)-dimethyladenosine(1518)/N(6)-dimethyladenosine(1519) in 16S rRNA + 4 S-adenosyl-L-homocysteine + 4 H(+). Its function is as follows. Specifically dimethylates two adjacent adenosines (A1518 and A1519) in the loop of a conserved hairpin near the 3'-end of 16S rRNA in the 30S particle. May play a critical role in biogenesis of 30S subunits. The protein is Ribosomal RNA small subunit methyltransferase A of Rhodopseudomonas palustris (strain HaA2).